A 486-amino-acid polypeptide reads, in one-letter code: Nucleolar protein 56 (486 aa).

In terms of domain architecture, Nop spans Cys-298–Ser-416. The interval Lys-450–Glu-486 is disordered. A compositionally biased stretch (basic residues) spans Pro-475–Glu-486.

This sequence belongs to the NOP5/NOP56 family.

It is found in the nucleus. Its subcellular location is the nucleolus. Functionally, required for 60S ribosomal subunit synthesis. The protein is Nucleolar protein 56 of Caenorhabditis elegans.